We begin with the raw amino-acid sequence, 129 residues long: Urease subunit beta (129 aa).

Belongs to the urease beta subunit family. Heterotrimer of UreA (gamma), UreB (beta) and UreC (alpha) subunits. Three heterotrimers associate to form the active enzyme.

It is found in the cytoplasm. It catalyses the reaction urea + 2 H2O + H(+) = hydrogencarbonate + 2 NH4(+). It participates in nitrogen metabolism; urea degradation; CO(2) and NH(3) from urea (urease route): step 1/1. In Photorhabdus laumondii subsp. laumondii (strain DSM 15139 / CIP 105565 / TT01) (Photorhabdus luminescens subsp. laumondii), this protein is Urease subunit beta.